The chain runs to 579 residues: Rhoptry surface protein CERLI2 (579 aa).

Residues 52–84 form the C2 domain; sequence LHNYRTFYLLIKINEIFNINKYKQIYIIVNTDK. Tandem repeats lie at residues 442 to 451, 452 to 461, 462 to 471, 472 to 481, 482 to 491, 492 to 501, 502 to 511, 522 to 531, 532 to 541, 542 to 551, and 552 to 561. The segment at 442–561 is 12 X 10 AA tandem repeat of Q-T-E-I-[K/N]-N-D-[H/N/I][I/N]; sequence QTDEIKNDNI…QTDEIKNDIN (120 aa).

The protein resides in the cytoplasmic vesicle. It localises to the secretory vesicle. Its subcellular location is the rhoptry membrane. It is found in the cell membrane. The protein localises to the host cell membrane. Plays an important role in rhoptry physiology and thus is essential for merozoite invasion of host erythrocytes. The chain is Rhoptry surface protein CERLI2 from Plasmodium falciparum (isolate 3D7).